The primary structure comprises 500 residues: MNYFPWLTTVVVFPIFAGLLLFFFPHRGNKVMRWYTICICVLELLLTTYAFCYHFELDDPLIQLMEDYKWIPFLDFYWRLGIDGLSIGPILLTGFITTLATLAAWPVTRDSRLFYFLMLAMYSGQIGSFSARDLLLFFIMWEFELIPVYLLLSMWGGKKRLYSATKFILYTAGGSIFLLMGVLGIGLYGSNEPTLNFETSANQSYPIALEILFYIGFLIAFAVKSPIIPLHTWLPDTHGEAHYSTCMLLAGILLKMGAYGLVRINMELLPHAHSIFSPWLIIVGIIQIIYAASTSSGQRNLKKRIAYSSVSHMGFIIIGIGSISDTGLNGAILQIISHGFIGAALFFLAGTSYDRIRLVYLDEMGGLAIPIPKIFTTFSILSMASLALPGMSGFVAELIVFFGIITSQKYLLMTKMVITLVMAIGIILTPIYLLSMLRQMFYGYKLFNAKNSYFFDSGPRELFVAISILIPVIGIGIYPDFVFSLSVDKVEAILSNYFAR.

15 consecutive transmembrane segments (helical) span residues 4–24 (FPWLTTVVVFPIFAGLLLFFF), 37–57 (ICICVLELLLTTYAFCYHFEL), 87–107 (IGPILLTGFITTLATLAAWPV), 113–130 (LFYFLMLAMYSGQIGSFS), 134–154 (LLLFFIMWEFELIPVYLLLSM), 167–187 (FILYTAGGSIFLLMGVLGIGL), 207–227 (IALEILFYIGFLIAFAVKSPI), 242–262 (HYSTCMLLAGILLKMGAYGLV), 272–292 (AHSIFSPWLIIVGIIQIIYAA), 305–325 (IAYSSVSHMGFIIIGIGSISD), 330–350 (GAILQIISHGFIGAALFFLAG), 364–384 (MGGLAIPIPKIFTTFSILSMA), 386–406 (LALPGMSGFVAELIVFFGIIT), 417–437 (VITLVMAIGIILTPIYLLSML), and 463–483 (FVAISILIPVIGIGIYPDFVF).

Belongs to the complex I subunit 4 family.

Its subcellular location is the plastid. The protein localises to the chloroplast thylakoid membrane. It catalyses the reaction a plastoquinone + NADH + (n+1) H(+)(in) = a plastoquinol + NAD(+) + n H(+)(out). The catalysed reaction is a plastoquinone + NADPH + (n+1) H(+)(in) = a plastoquinol + NADP(+) + n H(+)(out). The chain is NAD(P)H-quinone oxidoreductase chain 4, chloroplastic from Cucumis sativus (Cucumber).